The primary structure comprises 144 residues: MLDIKKIKEILPHRYPFLLVDRVISVEEGKKVTAIKNVTANEEFFNGHFPEYPVMPGVLIVEALAQTSGIAMMQSEANKGKIGLFAGIDGCRFKRQVVPGDQLLLEAEITRMRGAIAKAKVKATVEGDLVCEAEIMFALSDLPK.

Histidine 48 is an active-site residue.

Belongs to the thioester dehydratase family. FabZ subfamily.

It is found in the cytoplasm. The enzyme catalyses a (3R)-hydroxyacyl-[ACP] = a (2E)-enoyl-[ACP] + H2O. Involved in unsaturated fatty acids biosynthesis. Catalyzes the dehydration of short chain beta-hydroxyacyl-ACPs and long chain saturated and unsaturated beta-hydroxyacyl-ACPs. The protein is 3-hydroxyacyl-[acyl-carrier-protein] dehydratase FabZ of Listeria monocytogenes serotype 4b (strain CLIP80459).